We begin with the raw amino-acid sequence, 211 residues long: Transcriptional regulatory protein RcsA (211 aa).

Residues 135–200 enclose the HTH luxR-type domain; the sequence is SEVHPFTLSQ…VIYHVVRLTD (66 aa). Positions 159–178 form a DNA-binding region, H-T-H motif; the sequence is TIQISDKMQIKAKTVSSHKG.

It belongs to the RcsA family.

In terms of biological role, component of the Rcs signaling system, which controls transcription of numerous genes. Binds to DNA to regulate expression of genes. This chain is Transcriptional regulatory protein RcsA, found in Erwinia amylovora (Fire blight bacteria).